Consider the following 150-residue polypeptide: Histone H2B.2 (150 aa).

The span at 1–16 shows a compositional bias: basic and acidic residues; the sequence is MAPKAEKKPAAKKPAE. The interval 1–57 is disordered; sequence MAPKAEKKPAAKKPAEEEPAAEKAPAGKKPKAEKRVPAGKSAGKEGGEGKRGRKKGK. 2 positions are modified to N6-acetyllysine: Lys7 and Lys34. Lys146 participates in a covalent cross-link: Glycyl lysine isopeptide (Lys-Gly) (interchain with G-Cter in ubiquitin).

This sequence belongs to the histone H2B family. In terms of assembly, the nucleosome is a histone octamer containing two molecules each of H2A, H2B, H3 and H4 assembled in one H3-H4 heterotetramer and two H2A-H2B heterodimers. The octamer wraps approximately 147 bp of DNA. In terms of processing, can be acetylated to form H2BK6ac and H2BK33ac. Post-translationally, monoubiquitinated to form H2BK143ub1; may give a specific tag for epigenetic transcriptional activation.

Its subcellular location is the nucleus. The protein localises to the chromosome. Core component of nucleosome. Nucleosomes wrap and compact DNA into chromatin, limiting DNA accessibility to the cellular machineries which require DNA as a template. Histones thereby play a central role in transcription regulation, DNA repair, DNA replication and chromosomal stability. DNA accessibility is regulated via a complex set of post-translational modifications of histones, also called histone code, and nucleosome remodeling. This is Histone H2B.2 from Zea mays (Maize).